The primary structure comprises 388 residues: 3-dehydroquinate synthase (388 aa).

Residues 85-90, 119-123, 143-144, Lys156, Lys165, and 183-186 contribute to the NAD(+) site; these read DGEQYK, GVIGD, TT, and TLKT. 3 residues coordinate Zn(2+): Glu198, His261, and His278.

It belongs to the sugar phosphate cyclases superfamily. Dehydroquinate synthase family. Co(2+) serves as cofactor. Zn(2+) is required as a cofactor. The cofactor is NAD(+).

Its subcellular location is the cytoplasm. The enzyme catalyses 7-phospho-2-dehydro-3-deoxy-D-arabino-heptonate = 3-dehydroquinate + phosphate. It functions in the pathway metabolic intermediate biosynthesis; chorismate biosynthesis; chorismate from D-erythrose 4-phosphate and phosphoenolpyruvate: step 2/7. Its function is as follows. Catalyzes the conversion of 3-deoxy-D-arabino-heptulosonate 7-phosphate (DAHP) to dehydroquinate (DHQ). The chain is 3-dehydroquinate synthase from Psychrobacter arcticus (strain DSM 17307 / VKM B-2377 / 273-4).